The chain runs to 636 residues: C-terminal binding protein AN (636 aa).

A disordered region spans residues Met1 to Pro21. NAD(+) contacts are provided by residues Ser91, Trp147–Leu148, Val169–Ser174, Asp193, Cys231–Thr237, Thr258–Ser260, Asp284, and Arg307–Tyr311. The segment at Val341–Pro489 is disordered. The span at Ser342 to Gln357 shows a compositional bias: acidic residues. The segment covering Glu369–Glu384 has biased composition (polar residues). Over residues Ile385–Glu395 the composition is skewed to basic and acidic residues. Polar residues predominate over residues Ser398–Ala409. The span at Ser417–Gln429 shows a compositional bias: basic residues. A compositionally biased stretch (polar residues) spans Gln430 to Glu445. Residues Ser470–Pro480 show a composition bias toward basic and acidic residues.

It belongs to the D-isomer specific 2-hydroxyacid dehydrogenase family. Plant AN subfamily. Homodimer. Interacts with KCBP and SUB (via intra-cellular domain); AN is not required for the correct subcellular localization and recycling of SUB. Binds to SOKs proteins polymers (e.g. SOK1, SOK2, SOK3 and SOK4). Interacts with IPGA1 on microtubule upon mechanical stress to regulate microtubule organization. It depends on NAD(+) as a cofactor. As to expression, expressed in cotyledons, leaves, roots, stems and floral buds.

Its subcellular location is the cytoplasm. It is found in the golgi apparatus. It localises to the trans-Golgi network. The protein resides in the cytoskeleton. Its function is as follows. Involved in controlling the equilibrium between tubular and stacked structures in the Golgi complex. Required for cortical microtubules (MTs) arrangement that confers cell shape. Cooperatively with IPGA1, negatively regulates cortical microtubules (CMTs) organization in response to mechanical stress and modulates pavement cells morphogenesis leading to puzzle shape, probably in an AAA1/KTN1-dependent manner. Regulates the width of leaves by controlling the polar elongation of leaf cells. Involved in the regulation of trichome branching. Seems to not be able to regulate gene transcription. Regulates epidermal cell divisions and elongation in a non-cell-autonomous manner (regulated by subepidermal cells), but regulates epidermal cell polarity, shape, trichome branching and elongation in a cell-autonomous manner. Negatively regulates growth in the petiole elongation. Prevents lipid peroxidation as a result of abiotic stress response. Is involved in the SUB-dependent signaling mechanism and may act in a membrane trafficking event around the trans-Golgi network. This chain is C-terminal binding protein AN, found in Arabidopsis thaliana (Mouse-ear cress).